The sequence spans 458 residues: NADH-quinone oxidoreductase subunit N (458 aa).

A run of 14 helical transmembrane segments spans residues 2–22, 30–50, 62–82, 94–114, 118–138, 153–173, 194–214, 235–255, 261–281, 290–310, 318–338, 361–381, 397–417, and 438–458; these read LLLLPEITLTLIALLGQFFAV, IISNIIILLCILSIFLTFKYS, GINIGISKSIVLLFTIISMII, LKFEFITLMLLSVVGIFVAIS, FLLLFCGMELTALTSYALAGF, FILGSLVSCLSLFGISFIYGF, LGLIIGIILFLSSIFFKLSSV, FNAASKIGMVIVLLNISKLII, INYNLIKIIAILSMLFGAFGA, LMAYSTILNIGYVLIGVLLHN, LLYMLIYAVGSIGFFTCLIIL, IAAVISIVMFSMIGIPPLTGF, FALAYCGIFTSVVAAFYYLKV, and LLLINYLVVGFLLLGSFIISF.

This sequence belongs to the complex I subunit 2 family. In terms of assembly, NDH-1 is composed of 14 different subunits. Subunits NuoA, H, J, K, L, M, N constitute the membrane sector of the complex.

The protein resides in the cell inner membrane. It catalyses the reaction a quinone + NADH + 5 H(+)(in) = a quinol + NAD(+) + 4 H(+)(out). Functionally, NDH-1 shuttles electrons from NADH, via FMN and iron-sulfur (Fe-S) centers, to quinones in the respiratory chain. The immediate electron acceptor for the enzyme in this species is believed to be ubiquinone. Couples the redox reaction to proton translocation (for every two electrons transferred, four hydrogen ions are translocated across the cytoplasmic membrane), and thus conserves the redox energy in a proton gradient. This Rickettsia conorii (strain ATCC VR-613 / Malish 7) protein is NADH-quinone oxidoreductase subunit N.